The chain runs to 309 residues: Protein FdhE homolog (309 aa).

This sequence belongs to the FdhE family.

The protein localises to the cytoplasm. In terms of biological role, necessary for formate dehydrogenase activity. The protein is Protein FdhE homolog of Yersinia enterocolitica serotype O:8 / biotype 1B (strain NCTC 13174 / 8081).